The following is a 548-amino-acid chain: Non-structural protein NS1 (548 aa).

It belongs to the orbivirus non-structural protein NS1 family.

The protein is Non-structural protein NS1 (Segment-5) of Camelus dromedarius (Dromedary).